Reading from the N-terminus, the 662-residue chain is Methionine--tRNA ligase (662 aa).

A 'HIGH' region motif is present at residues 14-24 (YYPSGKLHLGS). Residues 308 to 312 (KMSKS) carry the 'KMSKS' region motif. Lys-311 is a binding site for ATP. Residues 559 to 662 (DFEKIELKVA…DDVPAGSLIG (104 aa)) enclose the tRNA-binding domain.

Belongs to the class-I aminoacyl-tRNA synthetase family. MetG type 2B subfamily. In terms of assembly, homodimer.

It is found in the cytoplasm. It carries out the reaction tRNA(Met) + L-methionine + ATP = L-methionyl-tRNA(Met) + AMP + diphosphate. Functionally, is required not only for elongation of protein synthesis but also for the initiation of all mRNA translation through initiator tRNA(fMet) aminoacylation. The protein is Methionine--tRNA ligase (metG) of Lactococcus lactis subsp. lactis (strain IL1403) (Streptococcus lactis).